The sequence spans 91 residues: Putative defensin-like protein 145 (91 aa).

Positions 1–26 (MNKNIIFSFTVLTLFVIFVQVTGVIG) are cleaved as a signal peptide. Asn-35 and Asn-68 each carry an N-linked (GlcNAc...) asparagine glycan. Cystine bridges form between Cys-39/Cys-84, Cys-52/Cys-74, Cys-57/Cys-78, and Cys-61/Cys-80.

The protein belongs to the DEFL family.

It is found in the secreted. This chain is Putative defensin-like protein 145 (LCR2), found in Arabidopsis thaliana (Mouse-ear cress).